We begin with the raw amino-acid sequence, 376 residues long: N-acetyldiaminopimelate deacetylase (376 aa).

Aspartate 69 is a catalytic residue. The active-site Proton acceptor is glutamate 128.

This sequence belongs to the peptidase M20A family. N-acetyldiaminopimelate deacetylase subfamily.

The enzyme catalyses N-acetyl-(2S,6S)-2,6-diaminopimelate + H2O = (2S,6S)-2,6-diaminopimelate + acetate. The protein operates within amino-acid biosynthesis; L-lysine biosynthesis via DAP pathway; LL-2,6-diaminopimelate from (S)-tetrahydrodipicolinate (acetylase route): step 3/3. Its function is as follows. Catalyzes the conversion of N-acetyl-diaminopimelate to diaminopimelate and acetate. This Bacillus cereus (strain AH820) protein is N-acetyldiaminopimelate deacetylase.